The primary structure comprises 299 residues: MAALLKRILRRRMAEKRSGRGRMAAARTTGAQSRKTAQRSGRSEADRRRRVHGQNFLVDRETVQRFVRFADPDPGEVVLEVGAGNGAITRELARLCRRVVAYEIDRHFADRLREATAEDPRIEVVAGDFLKTSQPKVPFSVVGNIPFGNTADIVDWCLNARRLRTTTLVTQLEYARKRTGGYRRWSRLTVATWPEVEWRMGERISRRWFRPVPAVDSAVLRLERRPVPLIPPGLMHDFRDLVETGFTGKGGSLDASLRRRFPARRVAAGFRRARLEQGVVVAYVTPGQWITLFEELHGR.

The tract at residues 14 to 53 (AEKRSGRGRMAAARTTGAQSRKTAQRSGRSEADRRRRVHG) is disordered. Residues 21–31 (GRMAAARTTGA) show a composition bias toward low complexity. Residues Asn55, Leu57, Gly82, Glu103, Asp128, and Asn144 each coordinate S-adenosyl-L-methionine.

The protein belongs to the class I-like SAM-binding methyltransferase superfamily. rRNA adenine N(6)-methyltransferase family.

Its function is as follows. Probable RNA methylase. Confers resistance to carbomycin and several other macrolides, lincomycin and vernamycin B, but not to all macrolide-lincosamide-streptogramin B antibiotics. This chain is rRNA methyltransferase (carB), found in Streptomyces thermotolerans.